Consider the following 531-residue polypeptide: MVNLRKKFEMKQANQPGRVPNYFRNKYHGYDDDMPNLLPTFIKLLDTEKDEDGAGLNAAEQIDRELKSRKCDILKFRNLTILELPHLNEFLFSTELNPPISDQVRHRDMNAPLSHYFIHTSLKSYFTGNNVFGRLYSIEPIIDALKQGVRVVELDLLPFGKDGICVRPKWNFEKPLELQECLDAIKQHAFTPTRSYPVIITIKDSLKPDLQSKVTQMIDQTFGDMVYHEDPQQSLEEFPSPAELQNKILISRRPPTKLLYAKAVENGVELEIQEGSTDKNYQSVVGFHAVEPRGMLQKALTDDVQQPGWYERDVISFTQNKFLRTRPKKRNLLSNPPYKPQRAWMHGAQMIALSRQDDKEKLWLMQGMFRANGGCGYVKKPNFLLNAGSSGVFYPTENPVVVKTLKVKIYMGDGWIVDFKKRIGRLSKPDLYVRISIAGVPHDEKIMNTTVKNNEWKPTWGEEFTFPLTYPDLALISFEVYDYEVSTPDYFCGQTCLPVSELIEGIRAVPLYDERGKACSSTMLLTRFKWS.

Residues 107-253 enclose the PI-PLC X-box domain; that stretch reads RDMNAPLSHY…LQNKILISRR (147 aa). Residues 265-385 form the PI-PLC Y-box domain; it reads ENGVELEIQE…GYVKKPNFLL (121 aa). Ser-276 is modified (phosphoserine). The region spanning 386-513 is the C2 domain; the sequence is NAGSSGVFYP…EGIRAVPLYD (128 aa).

The cofactor is Ca(2+). Expressed in leaves, roots, flowers and siliques.

Its subcellular location is the cell membrane. It catalyses the reaction a 1,2-diacyl-sn-glycero-3-phospho-(1D-myo-inositol-4,5-bisphosphate) + H2O = 1D-myo-inositol 1,4,5-trisphosphate + a 1,2-diacyl-sn-glycerol + H(+). Functionally, the production of the second messenger molecules diacylglycerol (DAG) and inositol 1,4,5-trisphosphate (IP3) is mediated by activated phosphatidylinositol-specific phospholipase C enzymes. This is Phosphoinositide phospholipase C 9 (PLC9) from Arabidopsis thaliana (Mouse-ear cress).